The following is a 329-amino-acid chain: UDP-glucose 4-epimerase (329 aa).

NAD(+) contacts are provided by residues 11 to 12 (YV), 31 to 36 (DNFSTG), 51 to 52 (DV), 71 to 75 (FAARS), Thr115, Tyr139, Lys143, and Phe167. Residues Thr115 and Tyr139 each contribute to the substrate site. Catalysis depends on Tyr139, which acts as the Proton acceptor. Residues Asn168, 185-186 (HL), 202-204 (FMF), Arg217, and 277-280 (RAGD) each bind substrate.

It belongs to the NAD(P)-dependent epimerase/dehydratase family. Homodimer. It depends on NAD(+) as a cofactor.

The enzyme catalyses UDP-alpha-D-glucose = UDP-alpha-D-galactose. It functions in the pathway carbohydrate metabolism; galactose metabolism. Involved in the metabolism of galactose. Catalyzes the conversion of UDP-galactose (UDP-Gal) to UDP-glucose (UDP-Glc) through a mechanism involving the transient reduction of NAD. The protein is UDP-glucose 4-epimerase (galE) of Corynebacterium glutamicum (strain ATCC 13032 / DSM 20300 / JCM 1318 / BCRC 11384 / CCUG 27702 / LMG 3730 / NBRC 12168 / NCIMB 10025 / NRRL B-2784 / 534).